A 273-amino-acid chain; its full sequence is Petrobactin import ATP-binding protein FpuD (273 aa).

In terms of domain architecture, ABC transporter spans leucine 5–glutamate 241. Residue glycine 37–serine 44 coordinates ATP.

This sequence belongs to the ABC transporter superfamily. In terms of assembly, the complex is composed of two ATP-binding proteins (FpuD), two transmembrane proteins (FpuB) and a solute-binding protein (FpuA).

It localises to the cell membrane. The catalysed reaction is a Fe(III)-siderophore(out) + ATP + H2O = a Fe(III)-siderophore(in) + ADP + phosphate + H(+). In terms of biological role, part of an ABC transporter complex involved in ferric-petrobactin uptake. Probably responsible for energy coupling to the transport system. The polypeptide is Petrobactin import ATP-binding protein FpuD (Bacillus anthracis).